The sequence spans 640 residues: MQTAENIEHLNFQAEANQLLKLMIHSLYSNKEIFLRELISNASDAADKLRFEGLSDAALYESDPDLKIRIAYDKEARTITIIDNGIGMSRQEVINNIGTIAKSGTREFFDSLTGDQAKDANLIGQFGVGFYSAFIVADKVTLTTRRAGLTIEHGVRWESGGEGEYTLETVEKPDRGTEIVLHLREGEDELLSSFQLRSIIRKYSDHITLPIVMKKEVWDDESKSYRLSDEDETINQASAIWARPKNEITQEQYDEFYKHVAHDFEPPLAHVHARVEGKQEYIQLLYIPAHAPFDLFDREHRHGLKLYVRRVFIMDDAEKLLPGYLRFVRGIIDSSDLPLNVSREILQESKDIDSIRAGSVKKVLGLIEDLAMSDKSEDQEKFKTFWREFGQVLKEGIAEDYSNRERIAKLLRFTSTHDEREEQTVSLDDYIARMKPEQEKIYYITADGLKAAQSSPHLEIFRKKGIEVLLLCDRIDEWLVANLNEYTGKSLQSIAKGNLDLGKLEDEEEKKEHEKEAGDFQELTNKMKEVLGEQVKDVRITYRLTESPACLVADTHDVSGNLGRLLKSAGQKVPDSKPFLEINPHHPMIQRLKYEEAKFADWSHILFDQALLAEGGQLEDPAGFVKRLNDLLLQNILSGK.

The segment at 1–343 (MQTAENIEHL…SSDLPLNVSR (343 aa)) is a; substrate-binding. The segment at 344–564 (EILQESKDID…THDVSGNLGR (221 aa)) is b. Residues 565 to 640 (LLKSAGQKVP…LLLQNILSGK (76 aa)) are c.

It belongs to the heat shock protein 90 family. As to quaternary structure, homodimer.

The protein localises to the cytoplasm. Functionally, molecular chaperone. Has ATPase activity. The sequence is that of Chaperone protein HtpG from Nitrosomonas europaea (strain ATCC 19718 / CIP 103999 / KCTC 2705 / NBRC 14298).